We begin with the raw amino-acid sequence, 449 residues long: Elongation factor 1-alpha C (449 aa).

One can recognise a tr-type G domain in the interval 5 to 234 (KQHVSIVVIG…DACDPPKRPV (230 aa)). The interval 14–21 (GHVDSGKS) is G1. 14-21 (GHVDSGKS) contacts GTP. Lysine 55 carries the N6,N6-dimethyllysine modification. The segment at 70-74 (GITID) is G2. Lysine 79 is subject to N6,N6,N6-trimethyllysine. The tract at residues 91–94 (DAPG) is G3. GTP contacts are provided by residues 91–95 (DAPGH) and 153–156 (NKMD). Residues 153 to 156 (NKMD) form a G4 region. Residue lysine 187 is modified to N6,N6,N6-trimethyllysine. Residues 194–196 (SGW) are G5. An N6-methyllysine modification is found at lysine 265. Lysine 310 and lysine 400 each carry N6,N6,N6-trimethyllysine.

It belongs to the TRAFAC class translation factor GTPase superfamily. Classic translation factor GTPase family. EF-Tu/EF-1A subfamily.

Its subcellular location is the cytoplasm. Its function is as follows. This protein promotes the GTP-dependent binding of aminoacyl-tRNA to the A-site of ribosomes during protein biosynthesis. The protein is Elongation factor 1-alpha C (TEF-C) of Porphyra purpurea (Red seaweed).